A 90-amino-acid chain; its full sequence is Probable Fe(2+)-trafficking protein (90 aa).

The protein belongs to the Fe(2+)-trafficking protein family.

In terms of biological role, could be a mediator in iron transactions between iron acquisition and iron-requiring processes, such as synthesis and/or repair of Fe-S clusters in biosynthetic enzymes. The protein is Probable Fe(2+)-trafficking protein of Cupriavidus pinatubonensis (strain JMP 134 / LMG 1197) (Cupriavidus necator (strain JMP 134)).